We begin with the raw amino-acid sequence, 906 residues long: Protein translocase subunit SecA (906 aa).

Residues Q87, 105-109 (GEGKT), and D512 each bind ATP. The disordered stretch occupies residues 875-897 (VTFVRDEQKVGRNDPCPCGSGKK). C890, C892, C901, and H902 together coordinate Zn(2+).

It belongs to the SecA family. Monomer and homodimer. Part of the essential Sec protein translocation apparatus which comprises SecA, SecYEG and auxiliary proteins SecDF-YajC and YidC. Zn(2+) is required as a cofactor.

The protein resides in the cell inner membrane. Its subcellular location is the cytoplasm. The catalysed reaction is ATP + H2O + cellular proteinSide 1 = ADP + phosphate + cellular proteinSide 2.. In terms of biological role, part of the Sec protein translocase complex. Interacts with the SecYEG preprotein conducting channel. Has a central role in coupling the hydrolysis of ATP to the transfer of proteins into and across the cell membrane, serving both as a receptor for the preprotein-SecB complex and as an ATP-driven molecular motor driving the stepwise translocation of polypeptide chains across the membrane. The polypeptide is Protein translocase subunit SecA (Aeromonas hydrophila subsp. hydrophila (strain ATCC 7966 / DSM 30187 / BCRC 13018 / CCUG 14551 / JCM 1027 / KCTC 2358 / NCIMB 9240 / NCTC 8049)).